Consider the following 294-residue polypeptide: Transcription repressor OFP14 (294 aa).

The segment covering 49-60 has biased composition (basic residues); the sequence is SFKHRRRSSKTR. Disordered stretches follow at residues 49–72, 96–129, and 141–185; these read SFKH…HQDS, DDQE…DDDD, and AVYD…SRST. 2 stretches are compositionally biased toward basic and acidic residues: residues 61–72 and 96–117; these read FSKEEPVYHQDS and DDQE…RESS. Residues 118–128 are compositionally biased toward acidic residues; it reads SDDSDDDDDDD. Residues 164-185 show a composition bias toward low complexity; sequence SSEGRPSMETTSTSSERQSRST. One can recognise an OVATE domain in the interval 195–259; sequence VLRYTDEPQE…LSAFVDLIIA (65 aa).

As to quaternary structure, interacts with KNAT2 and KNAT3. As to expression, expressed in roots, rosette and cauline leaves, shoots, stems, flower buds and siliques.

It localises to the nucleus. Transcriptional repressor that may regulate multiple aspects of plant growth and development through the regulation of BEL1-LIKE (BLH) and KNOX TALE (KNAT) homeodomain transcription factors. The sequence is that of Transcription repressor OFP14 (OFP14) from Arabidopsis thaliana (Mouse-ear cress).